Consider the following 322-residue polypeptide: N-acetyl-gamma-glutamyl-phosphate reductase (322 aa).

Residue Cys132 is part of the active site.

Belongs to the NAGSA dehydrogenase family. Type 1 subfamily.

The protein localises to the cytoplasm. It catalyses the reaction N-acetyl-L-glutamate 5-semialdehyde + phosphate + NADP(+) = N-acetyl-L-glutamyl 5-phosphate + NADPH + H(+). The protein operates within amino-acid biosynthesis; L-arginine biosynthesis; N(2)-acetyl-L-ornithine from L-glutamate: step 3/4. In terms of biological role, catalyzes the NADPH-dependent reduction of N-acetyl-5-glutamyl phosphate to yield N-acetyl-L-glutamate 5-semialdehyde. This Bacteroides thetaiotaomicron (strain ATCC 29148 / DSM 2079 / JCM 5827 / CCUG 10774 / NCTC 10582 / VPI-5482 / E50) protein is N-acetyl-gamma-glutamyl-phosphate reductase.